The following is a 122-amino-acid chain: Small ribosomal subunit protein uS13 (122 aa).

The disordered stretch occupies residues 97–122; it reads PVRGQRTHTNARTRKGPAKAIAGKKK.

The protein belongs to the universal ribosomal protein uS13 family. As to quaternary structure, part of the 30S ribosomal subunit. Forms a loose heterodimer with protein S19. Forms two bridges to the 50S subunit in the 70S ribosome.

Its function is as follows. Located at the top of the head of the 30S subunit, it contacts several helices of the 16S rRNA. In the 70S ribosome it contacts the 23S rRNA (bridge B1a) and protein L5 of the 50S subunit (bridge B1b), connecting the 2 subunits; these bridges are implicated in subunit movement. Contacts the tRNAs in the A and P-sites. This is Small ribosomal subunit protein uS13 from Rhizobium rhizogenes (strain K84 / ATCC BAA-868) (Agrobacterium radiobacter).